A 104-amino-acid chain; its full sequence is Putative Fis-like DNA-binding protein (104 aa).

Positions 80 to 99 (QTKASELLGLNRGTLRKKLK) form a DNA-binding region, H-T-H motif.

It belongs to the transcriptional regulatory Fis family.

This Pseudomonas aeruginosa (strain ATCC 15692 / DSM 22644 / CIP 104116 / JCM 14847 / LMG 12228 / 1C / PRS 101 / PAO1) protein is Putative Fis-like DNA-binding protein.